Here is a 23-residue protein sequence, read N- to C-terminus: Potassium channel toxin alpha-KTx 13.1 (23 aa).

Cystine bridges form between C2-C15, C5-C20, and C9-C22. The interval 13-20 is interaction with Ca(2+)-activated K(+) channels; the sequence is GKCINGRC.

As to expression, expressed by the venom gland.

The protein resides in the secreted. Blocks reversibly Shaker B potassium channels. Also displaces binding of noxiustoxin to mouse brain synaptosome membranes. This Tityus obscurus (Amazonian scorpion) protein is Potassium channel toxin alpha-KTx 13.1.